The sequence spans 239 residues: ATP synthase subunit a, chloroplastic (239 aa).

A run of 5 helical transmembrane segments spans residues 30 to 50 (VLLV…LGTF), 87 to 107 (VPFI…GALV), 126 to 146 (INTT…AGLS), 191 to 211 (LVVA…VMVL), and 212 to 232 (GLFA…SYIG).

It belongs to the ATPase A chain family. As to quaternary structure, F-type ATPases have 2 components, CF(1) - the catalytic core - and CF(0) - the membrane proton channel. CF(1) has five subunits: alpha(3), beta(3), gamma(1), delta(1), epsilon(1). CF(0) has four main subunits: a, b, b' and c.

It is found in the plastid. Its subcellular location is the chloroplast thylakoid membrane. Key component of the proton channel; it plays a direct role in the translocation of protons across the membrane. This is ATP synthase subunit a, chloroplastic from Cyanidium caldarium (Red alga).